Consider the following 478-residue polypeptide: Cytochrome c-552 (478 aa).

Residues 1–26 form the signal peptide; it reads MARKTLRARRFFSLIFPFFFITSVYA. Residue H94 coordinates heme c. Positions 122, 125, and 126 each coordinate heme. 6 residues coordinate heme c: C160, C163, H164, C209, C212, and H213. Residues E215, Y216, K261, and Q263 each coordinate Ca(2+). Y216 is a substrate binding site. Residue H264 participates in substrate binding. H275, C282, C285, H286, H301, C314, C317, H318, and H393 together coordinate heme c.

It belongs to the cytochrome c-552 family. Ca(2+) is required as a cofactor. It depends on heme c as a cofactor.

Its subcellular location is the periplasm. The catalysed reaction is 6 Fe(III)-[cytochrome c] + NH4(+) + 2 H2O = 6 Fe(II)-[cytochrome c] + nitrite + 8 H(+). It functions in the pathway nitrogen metabolism; nitrate reduction (assimilation). Catalyzes the reduction of nitrite to ammonia, consuming six electrons in the process. The chain is Cytochrome c-552 from Salmonella typhi.